The sequence spans 261 residues: MIIYNILIVLLLAINTLANPILPASPNATIVGGEKALAGECPYQISLQSSSHFCGGTILDEYWILTAAHCVAGQTASKLSIRYNSLKHSLGGEKISVAKIFAHEKYDSYQIDNDIALIKLKSPMKLNQKNAKAVGLPAKGSDVKVGDQVRVSGWGYLEEGSYSLPSELRRVDIAVVSRKECNELYSKANAEVTDNMICGGDVANGGKDSCQGDSGGPVVDVKNNQVVGIVSWGYGCARKGYPGVYTRVGNFIDWIESKRSQ.

The N-terminal stretch at 1–18 (MIIYNILIVLLLAINTLA) is a signal peptide. The propeptide occupies 19-29 (NPILPASPNAT). The region spanning 30–260 (IVGGEKALAG…FIDWIESKRS (231 aa)) is the Peptidase S1 domain. A disulfide bridge links C54 with C70. Catalysis depends on charge relay system residues H69 and D114. Disulfide bonds link C181–C198 and C210–C236. The Charge relay system role is filled by S214.

It belongs to the peptidase S1 family.

The protein localises to the secreted. The sequence is that of Mite allergen Der p 3 (DERP3) from Dermatophagoides pteronyssinus (European house dust mite).